Here is a 164-residue protein sequence, read N- to C-terminus: Bacterial microcompartment shell protein EutK (164 aa).

In terms of domain architecture, BMC spans 4–88; it reads ALGLLEVDGM…PEEDTQWLIG (85 aa). The 57-residue stretch at 108–164 folds into the EutK-Ctail domain; the sequence is EFAEALLALLASVRQGMTAGEVAAHFGWPLEQARNVLEQLFSDGALRKRSSRYRIKN.

Belongs to the bacterial microcompartments protein family. Monomeric in solution.

It is found in the bacterial microcompartment. The protein operates within amine and polyamine degradation; ethanolamine degradation. In terms of biological role, a component of the bacterial microcompartment (BMC) shell dedicated to ethanolamine degradation. Expression of eutK, eutL, eutM, eutN, eutS (eutSMNLK) in E.coli leads to formation of a single BMC. Coexpression of eutQ with eutSMNLK permits E.coli to make cells with more than one mobile BMC, as is usual in vivo. Its function is as follows. The ethanolamine (EA) catabolic bacterial microcompartment (BMC) probably concentrates low levels of ethanolamine catabolic enzymes, concentrates volatile reaction intermediates, keeps the level of toxic acetaldehyde low, generates enough acetyl-CoA to support cell growth, and maintains a pool of free coenzyme A (CoA) and NAD. Deletion of BMC genes (eutK, eutL, eutM) restores growth of eutD deletions, suggesting there are dedicated pools of coenzyme A (CoA) and NAD in the BMC. Functionally, expression of the eut operon allows this bacteria to use ethanolamine as a carbon, nitrogen and energy source. It relies on cobalamin (vitamin B12) both as a cofactor for the ethanolamine ammonia-lyase (EAL) activity and to induce the operon. EA enhances bacterial survival in macrophages in a concentration-dependent manner, suggesting it is an important nutrient during infection. The chain is Bacterial microcompartment shell protein EutK (eutK) from Salmonella typhimurium (strain LT2 / SGSC1412 / ATCC 700720).